The primary structure comprises 563 residues: Arginine--tRNA ligase (563 aa).

Positions 120-130 match the 'HIGH' region motif; the sequence is PNIAKPFHIGH.

This sequence belongs to the class-I aminoacyl-tRNA synthetase family. Monomer.

Its subcellular location is the cytoplasm. The enzyme catalyses tRNA(Arg) + L-arginine + ATP = L-arginyl-tRNA(Arg) + AMP + diphosphate. The polypeptide is Arginine--tRNA ligase (Clostridium botulinum (strain 657 / Type Ba4)).